Reading from the N-terminus, the 208-residue chain is Ribosome maturation factor RimP (208 aa).

Residues 189–208 (EAPETGATTMARDGSEEETK) form a disordered region.

It belongs to the RimP family.

Its subcellular location is the cytoplasm. In terms of biological role, required for maturation of 30S ribosomal subunits. This chain is Ribosome maturation factor RimP, found in Ruegeria pomeroyi (strain ATCC 700808 / DSM 15171 / DSS-3) (Silicibacter pomeroyi).